Consider the following 178-residue polypeptide: Ribosome maturation factor RimM (178 aa).

The 78-residue stretch at 101–178 folds into the PRC barrel domain; that stretch reads TDEYYWYQLV…VMRVEWDADF (78 aa).

This sequence belongs to the RimM family. Binds ribosomal protein uS19.

Its subcellular location is the cytoplasm. Functionally, an accessory protein needed during the final step in the assembly of 30S ribosomal subunit, possibly for assembly of the head region. Essential for efficient processing of 16S rRNA. May be needed both before and after RbfA during the maturation of 16S rRNA. It has affinity for free ribosomal 30S subunits but not for 70S ribosomes. This is Ribosome maturation factor RimM from Pseudomonas entomophila (strain L48).